A 293-amino-acid chain; its full sequence is Carbapenem-hydrolyzing beta-lactamase KPC (293 aa).

Residues 1-24 form the signal peptide; it reads MSLYRRLVLLSCLSWPLAGFSATA. Ser69 serves as the catalytic Acyl-ester intermediate. The Proton acceptor role is filled by Glu167. 233-235 contributes to the substrate binding site; that stretch reads KTG.

This sequence belongs to the class-A beta-lactamase family.

The catalysed reaction is a beta-lactam + H2O = a substituted beta-amino acid. Its activity is regulated as follows. Not inhibited by EDTA, inhibited by clavulanic acid and tazobactam. Hydrolyzes carbapenems, penicillins, cephalosporins and aztreonam with varying efficiency. This chain is Carbapenem-hydrolyzing beta-lactamase KPC (bla), found in Klebsiella oxytoca.